A 217-amino-acid polypeptide reads, in one-letter code: 3,4-dihydroxy-2-butanone 4-phosphate synthase (217 aa).

D-ribulose 5-phosphate contacts are provided by residues 37–38 (RE), Asp-42, 150–154 (RRGHT), and Glu-174. Glu-38 contacts Mg(2+). His-153 is a binding site for Mg(2+).

Belongs to the DHBP synthase family. In terms of assembly, homodimer. The cofactor is Mg(2+). It depends on Mn(2+) as a cofactor.

It catalyses the reaction D-ribulose 5-phosphate = (2S)-2-hydroxy-3-oxobutyl phosphate + formate + H(+). The protein operates within cofactor biosynthesis; riboflavin biosynthesis; 2-hydroxy-3-oxobutyl phosphate from D-ribulose 5-phosphate: step 1/1. Functionally, catalyzes the conversion of D-ribulose 5-phosphate to formate and 3,4-dihydroxy-2-butanone 4-phosphate. The chain is 3,4-dihydroxy-2-butanone 4-phosphate synthase from Pseudoalteromonas translucida (strain TAC 125).